The primary structure comprises 956 residues: Thrombospondin-3 (956 aa).

The N-terminal stretch at 1–21 (MEKPELWGVLALLLLCSYTCG) is a signal peptide. The 172-residue stretch at 22–193 (SQDLQVIDLL…VESMKIILGG (172 aa)) folds into the Laminin G-like domain. 21 disulfide bridges follow: Cys278/Cys289, Cys283/Cys300, Cys303/Cys314, Cys320/Cys332, Cys326/Cys341, Cys344/Cys368, Cys374/Cys388, Cys382/Cys397, Cys400/Cys412, Cys418/Cys432, Cys426/Cys442, Cys444/Cys455, Cys471/Cys478, Cys483/Cys503, Cys519/Cys539, Cys542/Cys562, Cys578/Cys598, Cys601/Cys621, Cys639/Cys659, Cys679/Cys699, and Cys715/Cys936. The N-linked (GlcNAc...) asparagine glycan is linked to Asn310. The EGF-like 1; calcium-binding domain maps to 316-354 (DINECAHADPCFPGSSCINTMPGFHCEACPPGYKGTRVS). Residues 370–410 (DIDECNDGNNGGCDPNSICTNTVGSFKCGPCRLGFLGNQSQ) form the EGF-like 2; calcium-binding domain. The N-linked (GlcNAc...) asparagine glycan is linked to Asn407. An EGF-like 3 domain is found at 414-456 (PARTCHSPAHSPCHIHAHCLFERNGAVSCQCNVGWAGNGNVCG). 8 TSP type-3 repeats span residues 457–491 (PDTD…NSGQ), 492–527 (EDAD…NKDQ), 528–550 (QNSD…NNDQ), 551–586 (KDTD…NPLQ), 587–609 (TDRD…NPTQ), 610–647 (TDAD…NSSQ), 648–687 (LDSD…NPNQ), and 688–723 (KDSD…EVTL). Disordered stretches follow at residues 518-537 (NCRL…SFGD) and 546-699 (PNND…GDVC). Residues 555–568 (GNGEGDACDNDVDG) are compositionally biased toward acidic residues. A compositionally biased stretch (acidic residues) spans 612–628 (ADSDLVGDVCDTNEDSD). A glycan (N-linked (GlcNAc...) asparagine) is linked at Asn644. A compositionally biased stretch (acidic residues) spans 650–667 (SDNDGLGDECDGDDDNDG). One can recognise a TSP C-terminal domain in the interval 727–941 (RAYQTVILDP…LQYRCNDTVP (215 aa)). The N-linked (GlcNAc...) asparagine glycan is linked to Asn937.

This sequence belongs to the thrombospondin family. Oligomer; disulfide-linked. As to expression, brain, lung and cartilage.

Adhesive glycoprotein that mediates cell-to-cell and cell-to-matrix interactions. Can bind to fibrinogen, fibronectin, laminin and type V collagen. This chain is Thrombospondin-3 (Thbs3), found in Mus musculus (Mouse).